Here is a 153-residue protein sequence, read N- to C-terminus: Endoribonuclease YbeY (153 aa).

Zn(2+)-binding residues include histidine 116, histidine 120, and histidine 126.

Belongs to the endoribonuclease YbeY family. The cofactor is Zn(2+).

It localises to the cytoplasm. Its function is as follows. Single strand-specific metallo-endoribonuclease involved in late-stage 70S ribosome quality control and in maturation of the 3' terminus of the 16S rRNA. This chain is Endoribonuclease YbeY, found in Leifsonia xyli subsp. xyli (strain CTCB07).